The chain runs to 298 residues: Bifunctional protein FolD (298 aa).

Residues 167 to 169 (GRS), Ser-192, and Val-233 each bind NADP(+).

This sequence belongs to the tetrahydrofolate dehydrogenase/cyclohydrolase family. As to quaternary structure, homodimer.

The catalysed reaction is (6R)-5,10-methylene-5,6,7,8-tetrahydrofolate + NADP(+) = (6R)-5,10-methenyltetrahydrofolate + NADPH. It catalyses the reaction (6R)-5,10-methenyltetrahydrofolate + H2O = (6R)-10-formyltetrahydrofolate + H(+). Its pathway is one-carbon metabolism; tetrahydrofolate interconversion. Its function is as follows. Catalyzes the oxidation of 5,10-methylenetetrahydrofolate to 5,10-methenyltetrahydrofolate and then the hydrolysis of 5,10-methenyltetrahydrofolate to 10-formyltetrahydrofolate. The polypeptide is Bifunctional protein FolD (Chelativorans sp. (strain BNC1)).